The sequence spans 199 residues: Recombination protein RecR (199 aa).

Residues 57 to 72 form a C4-type zinc finger; sequence CSVCGNITEDDPCPIC. The 97-residue stretch at 80 to 176 folds into the Toprim domain; sequence SRVLVVERSR…KVTRLAHGLS (97 aa).

It belongs to the RecR family.

Functionally, may play a role in DNA repair. It seems to be involved in an RecBC-independent recombinational process of DNA repair. It may act with RecF and RecO. The protein is Recombination protein RecR of Limosilactobacillus fermentum (strain NBRC 3956 / LMG 18251) (Lactobacillus fermentum).